A 224-amino-acid polypeptide reads, in one-letter code: Propanediol dehydratase medium subunit (224 aa).

The segment at 1–18 is targets protein to the BMC; sequence MEINEKLLRQIIEDVLSE.

It belongs to the diol/glycerol dehydratase medium subunit family. As to quaternary structure, the propanediol dehydratase enzyme is a heterotrimeric complex composed of a large (PduC), a medium (PduD) and a small (PduE) subunit. Adenosylcob(III)alamin serves as cofactor.

It localises to the bacterial microcompartment. It catalyses the reaction propane-1,2-diol = propanal + H2O. It functions in the pathway polyol metabolism; 1,2-propanediol degradation. Its function is as follows. Part of the PduCDE complex that catalyzes the dehydration of 1,2-propanediol (1,2-PD) to propionaldehyde. This subunit is directly targeted to the bacterial microcompartment (BMC). Expression of a cosmid containing the full 21-gene pdu operon in E.coli allows E.coli to grow on 1,2-propanediol (1,2-PD) with the appearance of BMCs in its cytoplasm. Functionally, the 1,2-PD-specific bacterial microcompartment (BMC) concentrates low levels of 1,2-PD catabolic enzymes, concentrates volatile reaction intermediates thus enhancing pathway flux and keeps the level of toxic, mutagenic propionaldehyde low. This Citrobacter freundii protein is Propanediol dehydratase medium subunit.